The primary structure comprises 241 residues: Pyridoxine 5'-phosphate synthase (241 aa).

Asparagine 7 is a 3-amino-2-oxopropyl phosphate binding site. 9-10 (DH) serves as a coordination point for 1-deoxy-D-xylulose 5-phosphate. Arginine 18 lines the 3-amino-2-oxopropyl phosphate pocket. Catalysis depends on histidine 43, which acts as the Proton acceptor. Residues arginine 45 and histidine 50 each coordinate 1-deoxy-D-xylulose 5-phosphate. The active-site Proton acceptor is glutamate 70. 1-deoxy-D-xylulose 5-phosphate is bound at residue threonine 100. Residue histidine 191 is the Proton donor of the active site. 3-amino-2-oxopropyl phosphate contacts are provided by residues glycine 192 and 213–214 (GH).

It belongs to the PNP synthase family. As to quaternary structure, homooctamer; tetramer of dimers.

The protein localises to the cytoplasm. It carries out the reaction 3-amino-2-oxopropyl phosphate + 1-deoxy-D-xylulose 5-phosphate = pyridoxine 5'-phosphate + phosphate + 2 H2O + H(+). Its pathway is cofactor biosynthesis; pyridoxine 5'-phosphate biosynthesis; pyridoxine 5'-phosphate from D-erythrose 4-phosphate: step 5/5. Functionally, catalyzes the complicated ring closure reaction between the two acyclic compounds 1-deoxy-D-xylulose-5-phosphate (DXP) and 3-amino-2-oxopropyl phosphate (1-amino-acetone-3-phosphate or AAP) to form pyridoxine 5'-phosphate (PNP) and inorganic phosphate. This is Pyridoxine 5'-phosphate synthase from Maridesulfovibrio salexigens (strain ATCC 14822 / DSM 2638 / NCIMB 8403 / VKM B-1763) (Desulfovibrio salexigens).